The sequence spans 345 residues: S-adenosylmethionine:tRNA ribosyltransferase-isomerase (345 aa).

The protein belongs to the QueA family. In terms of assembly, monomer.

The protein localises to the cytoplasm. The enzyme catalyses 7-aminomethyl-7-carbaguanosine(34) in tRNA + S-adenosyl-L-methionine = epoxyqueuosine(34) in tRNA + adenine + L-methionine + 2 H(+). It functions in the pathway tRNA modification; tRNA-queuosine biosynthesis. Transfers and isomerizes the ribose moiety from AdoMet to the 7-aminomethyl group of 7-deazaguanine (preQ1-tRNA) to give epoxyqueuosine (oQ-tRNA). In Finegoldia magna (strain ATCC 29328 / DSM 20472 / WAL 2508) (Peptostreptococcus magnus), this protein is S-adenosylmethionine:tRNA ribosyltransferase-isomerase.